The sequence spans 584 residues: Dihydroxyacetone kinase 1 (584 aa).

Ser2 carries the N-acetylserine modification. Ser2 and Ser5 each carry phosphoserine. Residues 7–353 (EVTDPVNSSL…LNAFTNAPGW (347 aa)) form the DhaK domain. Residues 51–54 (GSGH), Lys103, and Asp108 each bind substrate. His220 serves as the catalytic Tele-hemiaminal-histidine intermediate. Ser365 bears the Phosphoserine mark. Positions 386 to 582 (DKFAEWMKSG…LCEFLKGVQS (197 aa)) constitute a DhaL domain. Residues 415–418 (DGDC) and 459–460 (TS) each bind ATP. Residue Ser512 is modified to Phosphoserine. Residues 514–515 (TM) and 567–569 (DPG) each bind ATP.

Belongs to the dihydroxyacetone kinase (DAK) family.

The enzyme catalyses dihydroxyacetone + ATP = dihydroxyacetone phosphate + ADP + H(+). The catalysed reaction is D-glyceraldehyde + ATP = D-glyceraldehyde 3-phosphate + ADP + H(+). The protein operates within polyol metabolism; glycerol fermentation; glycerone phosphate from glycerol (oxidative route): step 2/2. Catalyzes both the phosphorylation of dihydroxyacetone and of glyceraldehyde. This is Dihydroxyacetone kinase 1 (DAK1) from Saccharomyces cerevisiae (strain ATCC 204508 / S288c) (Baker's yeast).